Here is a 198-residue protein sequence, read N- to C-terminus: Recombination protein RecR (198 aa).

The C4-type zinc finger occupies 57–72; the sequence is CSVCNNITDLDPCHIC. One can recognise a Toprim domain in the interval 80 to 175; that stretch reads SIICVVQEPR…RVTRIAHGLP (96 aa).

The protein belongs to the RecR family.

May play a role in DNA repair. It seems to be involved in an RecBC-independent recombinational process of DNA repair. It may act with RecF and RecO. This is Recombination protein RecR from Brevibacillus brevis (strain 47 / JCM 6285 / NBRC 100599).